The chain runs to 64 residues: Translation machinery-associated protein 7 homolog (64 aa).

The interval 1–64 (MSGREGGKKK…QGGIKKSGKK (64 aa)) is disordered. Residues 27–44 (VAFKQKQKEQQKALDAAK) are compositionally biased toward basic and acidic residues.

The protein belongs to the TMA7 family.

The polypeptide is Translation machinery-associated protein 7 homolog (Anopheles funestus (African malaria mosquito)).